Here is a 200-residue protein sequence, read N- to C-terminus: Holliday junction branch migration complex subunit RuvA (200 aa).

A domain I region spans residues 1-64; sequence MITSIQGTLV…EDSQTLYGFA (64 aa). Residues 65–144 are domain II; that stretch reads SPAERDFFRL…ATGAAPGLAT (80 aa). A flexible linker region spans residues 145 to 151; it reads QPAAAAS. The segment at 152-200 is domain III; it reads PGASAHRDAVAALVALGYRSADADEAVRRASLALGEAATTESLIKKALS.

Belongs to the RuvA family. In terms of assembly, homotetramer. Forms an RuvA(8)-RuvB(12)-Holliday junction (HJ) complex. HJ DNA is sandwiched between 2 RuvA tetramers; dsDNA enters through RuvA and exits via RuvB. An RuvB hexamer assembles on each DNA strand where it exits the tetramer. Each RuvB hexamer is contacted by two RuvA subunits (via domain III) on 2 adjacent RuvB subunits; this complex drives branch migration. In the full resolvosome a probable DNA-RuvA(4)-RuvB(12)-RuvC(2) complex forms which resolves the HJ.

The protein localises to the cytoplasm. Its function is as follows. The RuvA-RuvB-RuvC complex processes Holliday junction (HJ) DNA during genetic recombination and DNA repair, while the RuvA-RuvB complex plays an important role in the rescue of blocked DNA replication forks via replication fork reversal (RFR). RuvA specifically binds to HJ cruciform DNA, conferring on it an open structure. The RuvB hexamer acts as an ATP-dependent pump, pulling dsDNA into and through the RuvAB complex. HJ branch migration allows RuvC to scan DNA until it finds its consensus sequence, where it cleaves and resolves the cruciform DNA. This chain is Holliday junction branch migration complex subunit RuvA, found in Opitutus terrae (strain DSM 11246 / JCM 15787 / PB90-1).